The sequence spans 232 residues: Large ribosomal subunit protein uL1 (232 aa).

This sequence belongs to the universal ribosomal protein uL1 family. Part of the 50S ribosomal subunit.

Binds directly to 23S rRNA. The L1 stalk is quite mobile in the ribosome, and is involved in E site tRNA release. Its function is as follows. Protein L1 is also a translational repressor protein, it controls the translation of the L11 operon by binding to its mRNA. In Bartonella quintana (strain Toulouse) (Rochalimaea quintana), this protein is Large ribosomal subunit protein uL1.